A 166-amino-acid chain; its full sequence is Regulatory protein RecX (166 aa).

Belongs to the RecX family.

The protein resides in the cytoplasm. Its function is as follows. Modulates RecA activity. The polypeptide is Regulatory protein RecX (Salmonella choleraesuis (strain SC-B67)).